The following is a 220-amino-acid chain: RPA-interacting protein B (220 aa).

The segment at 1–45 (MEAERRHRALYKGTTPPWKETYRKRCVERLKSNRSKLLDKFRQVG) is interaction with importin beta. The interaction with RPA1 stretch occupies residues 49 to 165 (HGGVGGSFLV…QCGVYINTQS (117 aa)). The RIP-type zinc finger occupies 138–213 (CPVCNRNYLT…ASLFMSCQEC (76 aa)).

Interacts directly with the RPA1 subunit of RPA complex. Interacts with importin beta, but not with importin alpha. Forms a complex with the RPA complex and importin beta, which is dissociated by Ran-GTP.

It is found in the nucleus. Its function is as follows. Mediates the import of RPA complex into the nucleus, via its interaction with importin beta. This chain is RPA-interacting protein B (rpain-b), found in Xenopus laevis (African clawed frog).